The chain runs to 287 residues: Pantothenate synthetase (287 aa).

37-44 lines the ATP pocket; the sequence is MGALHEGH. The active-site Proton donor is the His44. A (R)-pantoate-binding site is contributed by Gln68. Gln68 contributes to the beta-alanine binding site. Residue 154-157 participates in ATP binding; sequence GQKD. A (R)-pantoate-binding site is contributed by Gln160. Residues Val183 and 191–194 each bind ATP; that span reads LSSR.

This sequence belongs to the pantothenate synthetase family. In terms of assembly, homodimer.

It localises to the cytoplasm. It carries out the reaction (R)-pantoate + beta-alanine + ATP = (R)-pantothenate + AMP + diphosphate + H(+). It participates in cofactor biosynthesis; (R)-pantothenate biosynthesis; (R)-pantothenate from (R)-pantoate and beta-alanine: step 1/1. In terms of biological role, catalyzes the condensation of pantoate with beta-alanine in an ATP-dependent reaction via a pantoyl-adenylate intermediate. The polypeptide is Pantothenate synthetase (Leifsonia xyli subsp. xyli (strain CTCB07)).